The sequence spans 570 residues: Glutamate--tRNA ligase (570 aa).

Residues 105–115 carry the 'HIGH' region motif; the sequence is PNPDGAFHLGN.

Belongs to the class-I aminoacyl-tRNA synthetase family. Glutamate--tRNA ligase type 2 subfamily.

Its subcellular location is the cytoplasm. The enzyme catalyses tRNA(Glu) + L-glutamate + ATP = L-glutamyl-tRNA(Glu) + AMP + diphosphate. Catalyzes the attachment of glutamate to tRNA(Glu) in a two-step reaction: glutamate is first activated by ATP to form Glu-AMP and then transferred to the acceptor end of tRNA(Glu). The chain is Glutamate--tRNA ligase from Pyrococcus horikoshii (strain ATCC 700860 / DSM 12428 / JCM 9974 / NBRC 100139 / OT-3).